The chain runs to 282 residues: UDP-3-O-acyl-N-acetylglucosamine deacetylase (282 aa).

Zn(2+) is bound by residues H74, H226, and D230. H253 serves as the catalytic Proton donor.

This sequence belongs to the LpxC family. Requires Zn(2+) as cofactor.

The catalysed reaction is a UDP-3-O-[(3R)-3-hydroxyacyl]-N-acetyl-alpha-D-glucosamine + H2O = a UDP-3-O-[(3R)-3-hydroxyacyl]-alpha-D-glucosamine + acetate. Its pathway is glycolipid biosynthesis; lipid IV(A) biosynthesis; lipid IV(A) from (3R)-3-hydroxytetradecanoyl-[acyl-carrier-protein] and UDP-N-acetyl-alpha-D-glucosamine: step 2/6. Its function is as follows. Catalyzes the hydrolysis of UDP-3-O-myristoyl-N-acetylglucosamine to form UDP-3-O-myristoylglucosamine and acetate, the committed step in lipid A biosynthesis. The chain is UDP-3-O-acyl-N-acetylglucosamine deacetylase from Aquifex aeolicus (strain VF5).